A 314-amino-acid chain; its full sequence is Methionyl-tRNA formyltransferase (314 aa).

Residue 110–113 coordinates (6S)-5,6,7,8-tetrahydrofolate; the sequence is SLLP.

Belongs to the Fmt family.

The enzyme catalyses L-methionyl-tRNA(fMet) + (6R)-10-formyltetrahydrofolate = N-formyl-L-methionyl-tRNA(fMet) + (6S)-5,6,7,8-tetrahydrofolate + H(+). In terms of biological role, attaches a formyl group to the free amino group of methionyl-tRNA(fMet). The formyl group appears to play a dual role in the initiator identity of N-formylmethionyl-tRNA by promoting its recognition by IF2 and preventing the misappropriation of this tRNA by the elongation apparatus. In Bacillus anthracis (strain A0248), this protein is Methionyl-tRNA formyltransferase.